The sequence spans 240 residues: Axial regulator YABBY 3 (240 aa).

The C4-type zinc-finger motif lies at 30–57 (CSFCDTVLAVSVPPSSLFKTVTVRCGHC). The interval 135–156 (DHLQEMPRPPPANRPPEKRQRV) is disordered.

It belongs to the YABBY family. As to quaternary structure, interacts with SPL/NZZ. Interacts with SPEAR2. Binds to LUG and LUH; these complexes promote adaxial cell identity in leaves as well as embryonic shoot apical meristem (SAM) initiation and postembryonic SAM maintenance. As to expression, expressed in abaxial regions of lateral aerial organ primordia leading to cotyledons, leaves, flower meristems, sepals, petals, stamen and carpels, but not in roots.

The protein resides in the nucleus. Functionally, involved in the abaxial cell fate determination during embryogenesis and organogenesis. Regulates the initiation of embryonic shoot apical meristem (SAM) development. Contributes to the repression of KNOX genes (STM, KNAT1/BP and KNAT2) to avoid ectopic meristems. Binds DNA without sequence specificity. This chain is Axial regulator YABBY 3 (YAB3), found in Arabidopsis thaliana (Mouse-ear cress).